Consider the following 395-residue polypeptide: MRAVRLHAKWDPRPEFKLGPKDIEGKLTWLGSKVWRYPEVRVEEVPEPRIEKPTEIIIKVKACGICGSDVHMAQTDEEGYILYPGLTGFPVTLGHEFSGVVVEAGPEAINRRTNKRFEIGEPVCAEEMLWCGHCRPCAEGFPNHCENLNELGFNVDGAFAEYVKVDAKYAWSLRELEGVYEGDRLFLAGSLVEPTSVAYNAVIVRGGGIRPGDNVVILGGGPIGLAAVAILKHAGASKVILSEPSEVRRNLAKELGADHVIDPTKENFVEAVLDYTNGLGAKLFLEATGVPQLVWPQIEEVIWRARGINATVAIVARADAKIPLTGEVFQVRRAQIVGSQGHSGHGTFPRVISLMASGMDMTKIISKTVSMEEIPEYIKRLQTDKSLVKVTMLNE.

Zn(2+) is bound at residue Cys66. Residues Ser68 and His71 each act as charge relay system in the active site. Residues His95, Glu96, Cys131, Cys134, Cys137, Cys145, and Glu193 each contribute to the Zn(2+) site. 3 residues coordinate NAD(+): Ile223, Glu243, and Arg248.

The protein belongs to the zinc-containing alcohol dehydrogenase family. In terms of assembly, homodimer. Zn(2+) is required as a cofactor.

It catalyses the reaction scyllo-inosose + NAD(+) = 3-dehydro-scyllo-inosose + NADH + H(+). It functions in the pathway polyol metabolism; myo-inositol metabolism. In terms of biological role, catalyzes the NAD(+)-dependent oxidation of scyllo-inosose (2-keto-myo-inositol) to 3-dehydro-scyllo-inosose (diketo-inositol), and thus probably functions in a myo-inositol degradation pathway together with IolG, IolN and IolO. Has no activity on myo-inositol, D-chiro-inositol and 1-keto-D-chiro-inositol. This chain is Scyllo-inosose 3-dehydrogenase, found in Thermotoga maritima (strain ATCC 43589 / DSM 3109 / JCM 10099 / NBRC 100826 / MSB8).